A 31-amino-acid chain; its full sequence is U2-theraphotoxin-Hhn1a (31 aa).

Intrachain disulfides connect Cys-2–Cys-14, Cys-7–Cys-19, and Cys-13–Cys-26.

Expressed by the venom gland.

It localises to the secreted. Functionally, agglutinates erythrocytes. The sequence is that of U2-theraphotoxin-Hhn1a from Cyriopagopus hainanus (Chinese bird spider).